Reading from the N-terminus, the 257-residue chain is Snake venom serine protease Dav-KN (257 aa).

An N-terminal signal peptide occupies residues 1 to 18 (MVLIRVLANLLILQLSYA). Positions 19-24 (QKSSEL) are excised as a propeptide. Residues 25 to 248 (VIGGDECNIN…HLDWIKGIIA (224 aa)) form the Peptidase S1 domain. 5 disulfide bridges follow: C31–C162, C49–C65, C97–C255, C173–C188, and C199–C224. Residues H64 and D109 each act as charge relay system in the active site. Catalysis depends on S203, which acts as the Charge relay system.

Belongs to the peptidase S1 family. Snake venom subfamily. In terms of assembly, monomer. In terms of tissue distribution, expressed by the venom gland.

The protein resides in the secreted. Functionally, snake venom serine protease that may act in the hemostasis system of the prey. In Deinagkistrodon acutus (Hundred-pace snake), this protein is Snake venom serine protease Dav-KN.